A 399-amino-acid polypeptide reads, in one-letter code: Chorismate synthase (399 aa).

Arg-40 and Arg-46 together coordinate NADP(+). Residues 135 to 137 (RAS), 256 to 257 (QA), Gly-301, 316 to 320 (KPIAT), and Arg-342 contribute to the FMN site.

This sequence belongs to the chorismate synthase family. Homotetramer. FMNH2 serves as cofactor.

The enzyme catalyses 5-O-(1-carboxyvinyl)-3-phosphoshikimate = chorismate + phosphate. Its pathway is metabolic intermediate biosynthesis; chorismate biosynthesis; chorismate from D-erythrose 4-phosphate and phosphoenolpyruvate: step 7/7. Catalyzes the anti-1,4-elimination of the C-3 phosphate and the C-6 proR hydrogen from 5-enolpyruvylshikimate-3-phosphate (EPSP) to yield chorismate, which is the branch point compound that serves as the starting substrate for the three terminal pathways of aromatic amino acid biosynthesis. This reaction introduces a second double bond into the aromatic ring system. The sequence is that of Chorismate synthase from Arthrobacter sp. (strain FB24).